A 228-amino-acid chain; its full sequence is MSSTTQAPGPVYQWTADEAVQFLKEWNFSLGIILLFITIILQFGYTSRSMFIYVVKMIILWLMWPLIIVLCMFNCVYALNNVYLGFSIVFTIVSVVMWIMYFVNSIRLFIRTGSWWSFNPETNNLMCIDMKGTVYVRPIIEDYHTLTATIIRGHFYMQGVKLGTGFSLSDLPAYVTVAKVSHLCTYKRAFLDKVDGVSGFAVYVKSKVGNYRLPSNKPSGADTVLLRI.

Residues 2–25 lie on the Virion surface side of the membrane; that stretch reads SSTTQAPGPVYQWTADEAVQFLKE. A helical transmembrane segment spans residues 26 to 46; it reads WNFSLGIILLFITIILQFGYT. The Intravirion segment spans residues 47–56; that stretch reads SRSMFIYVVK. The helical transmembrane segment at 57–77 threads the bilayer; that stretch reads MIILWLMWPLIIVLCMFNCVY. At 78 to 85 the chain is on the virion surface side; that stretch reads ALNNVYLG. A helical transmembrane segment spans residues 86–106; the sequence is FSIVFTIVSVVMWIMYFVNSI. Over 107-228 the chain is Intravirion; it reads RLFIRTGSWW…SGADTVLLRI (122 aa).

This sequence belongs to the betacoronaviruses M protein family. In terms of assembly, homomultimer. Interacts with envelope E protein in the budding compartment of the host cell, which is located between endoplasmic reticulum and the Golgi complex. Forms a complex with HE and S proteins. Interacts with nucleocapsid N protein. This interaction probably participates in RNA packaging into the virus.

The protein resides in the virion membrane. Its subcellular location is the host Golgi apparatus membrane. Its function is as follows. Component of the viral envelope that plays a central role in virus morphogenesis and assembly via its interactions with other viral proteins. This is Membrane protein from Mus musculus (Mouse).